A 136-amino-acid chain; its full sequence is Small ribosomal subunit protein uS8 (136 aa).

Belongs to the universal ribosomal protein uS8 family. Part of the 30S ribosomal subunit. Contacts proteins S5 and S12.

Functionally, one of the primary rRNA binding proteins, it binds directly to 16S rRNA central domain where it helps coordinate assembly of the platform of the 30S subunit. The sequence is that of Small ribosomal subunit protein uS8 from Synechococcus sp. (strain JA-2-3B'a(2-13)) (Cyanobacteria bacterium Yellowstone B-Prime).